A 1140-amino-acid polypeptide reads, in one-letter code: Rho GTPase-activating protein gacF (1140 aa).

Disordered stretches follow at residues M1 to R145, E189 to I236, I455 to F504, E520 to S644, E661 to E700, E720 to S759, A773 to S927, and T952 to N1095. Composition is skewed to low complexity over residues L10 to F26 and Q35 to S71. Residues T28–Q55 are a coiled coil. A compositionally biased stretch (polar residues) spans I72–T82. Composition is skewed to low complexity over residues S83–P136 and D193–S222. Residues E234–F409 enclose the Rho-GAP domain. Composition is skewed to low complexity over residues N456–K475 and P482–S493. Polar residues predominate over residues I494 to F504. Positions I517–Q548 form a coiled coil. The span at E520–D533 shows a compositional bias: low complexity. Over residues E534–D549 the composition is skewed to acidic residues. Residues E550 to T566 are compositionally biased toward low complexity. Polar residues predominate over residues S572–K596. The span at Q597 to Q606 shows a compositional bias: basic residues. Over residues Q607–S631 the composition is skewed to low complexity. 2 stretches are compositionally biased toward polar residues: residues P632–G641 and N672–G684. Over residues D724–S759 the composition is skewed to low complexity. Polar residues predominate over residues A773–N796. Residues S797 to S822 are compositionally biased toward low complexity. Polar residues predominate over residues I823–P854. Low complexity-rich tracts occupy residues K891–P914, T952–T1058, and H1065–S1079.

It is found in the cytoplasm. Rho GTPase-activating protein involved in the signal transduction pathway. This is Rho GTPase-activating protein gacF (gacF) from Dictyostelium discoideum (Social amoeba).